A 523-amino-acid chain; its full sequence is Cyclin-dependent kinase 17 (523 aa).

The residue at position 9 (Ser9) is a Phosphoserine. The tract at residues 31–55 (IEESSSKDNEPIVKNGRPPTSHSMH) is disordered. Phosphoserine is present on residues Ser80, Ser92, and Ser105. Residues 103 to 123 (MGSDGESDQASGTSSDEVQSP) form a disordered region. Residues 110–123 (DQASGTSSDEVQSP) show a composition bias toward polar residues. Ser137, Ser146, Ser165, and Ser180 each carry phosphoserine. The Protein kinase domain maps to 192 to 473 (YIKLEKLGEG…AEEAMKHVYF (282 aa)). ATP-binding positions include 198–206 (LGEGTYATV) and Lys221. The active-site Proton acceptor is the Asp313.

It belongs to the protein kinase superfamily. CMGC Ser/Thr protein kinase family. CDC2/CDKX subfamily. As to quaternary structure, found in a complex containing CABLES1, CDK16 and TDRD7. Interacts with TDRD7. As to expression, brain specific. Within the brain it is concentrated in the neuronal layers of the hippocampus and olfactory bulb, which mostly consist of post-mitotic neurons.

The enzyme catalyses L-seryl-[protein] + ATP = O-phospho-L-seryl-[protein] + ADP + H(+). It carries out the reaction L-threonyl-[protein] + ATP = O-phospho-L-threonyl-[protein] + ADP + H(+). In terms of biological role, may play a role in terminally differentiated neurons. Has a Ser/Thr-phosphorylating activity for histone H1. The protein is Cyclin-dependent kinase 17 (Cdk17) of Rattus norvegicus (Rat).